A 237-amino-acid polypeptide reads, in one-letter code: Leucyl/phenylalanyl-tRNA--protein transferase (237 aa).

This sequence belongs to the L/F-transferase family.

It is found in the cytoplasm. It catalyses the reaction N-terminal L-lysyl-[protein] + L-leucyl-tRNA(Leu) = N-terminal L-leucyl-L-lysyl-[protein] + tRNA(Leu) + H(+). It carries out the reaction N-terminal L-arginyl-[protein] + L-leucyl-tRNA(Leu) = N-terminal L-leucyl-L-arginyl-[protein] + tRNA(Leu) + H(+). The catalysed reaction is L-phenylalanyl-tRNA(Phe) + an N-terminal L-alpha-aminoacyl-[protein] = an N-terminal L-phenylalanyl-L-alpha-aminoacyl-[protein] + tRNA(Phe). Functionally, functions in the N-end rule pathway of protein degradation where it conjugates Leu, Phe and, less efficiently, Met from aminoacyl-tRNAs to the N-termini of proteins containing an N-terminal arginine or lysine. This is Leucyl/phenylalanyl-tRNA--protein transferase from Shewanella baltica (strain OS185).